Here is a 4558-residue protein sequence, read N- to C-terminus: Multifunctional-autoprocessing repeats-in-toxin (4558 aa).

A signal peptide spans 1–32 (MVFYLIPKRRVWLMGKPFWRSVEYFFTGNYSA). RtxA repeat units follow at residues 114-131 (GAAGGVSIDHLGNHGDVS), 134-151 (GAAAYNGITRKGLSGNVT), 154-170 (GAGGYNALWHETNQGNL), 174-197 (GAGAGNKLDRTWSNRYQGSHGDVT), 200-217 (GAGAANSISSRVETGNIT), 220-237 (GAGADNHLVRKGKVGDIT), 268-285 (GVGGYNSLYSDVAHGDIH), 288-304 (GGGAYNTIIRKGSGNDF), 594-611 (GAGGGNVIKSNVTRGNVH), 614-630 (GGGIANVILHSSQFGNT), 634-651 (GGGAANVIVKSGEEGDLT), 654-668 (GAGLANVLVHQSEQG), 751-763 (AGGANVLTKMGEG), 769-781 (MLGGANVITHISN), 792-808 (ALGGANILTKKGKGNTL), 811-826 (MGGGANVLTHVGDGTT), 830-845 (MVGGANILTKVGNGDT), 851-865 (GVGNVLTHVGDGQTL), 868-885 (MGAAGNIFTKVGDGTSIA), 887-901 (MIGAGNIFTHVGEGN), 906-920 (MGGLGNVFTKVGNGD), 925-942 (MVAEANVFTHIGDGMSVA), 944-960 (MLAKGNVATKVGNGTTL), 982-994 (MIGQANIMTKVGN), 1001-1016 (MVGKANIMTHVGDGTS), 1041-1053 (GKANIMTHVGDGL), 1077-1089 (AAAKANVVTHVGD), 1097-1112 (AGKGNILTKVGEGTTV), 1120-1132 (GNVMTHVGDGTTI), 1135-1152 (AKGKANLITKVGDGLGVN), 1155-1169 (WGQANVFTQVGDGDR), 1173-1189 (AKGEANLITKVGDGQEV), 1194-1209 (GEANIITHVGNGDDYT), 1211-1227 (AWGKANVITKVGHGQNV), 1230-1246 (AKGEANIVTQVGDGDSF), 1252-1266 (KGNIVTKVGDGMQVT), 1268-1285 (AKGQANITTTVGNGLNVT), 1306-1323 (AWGKYNINTKVGDGLNVA), and 1325-1342 (MKGKANANIHVGDGLNIN). Disordered regions lie at residues 1623 to 1688 (HATQ…KEES), 1752 to 1779 (TLSDNNSKVKESVAKSEAGVAQGEQNRA), and 1791 to 1890 (DAEK…NADG). Positions 1625-1634 (TQNPAAQNAL) are enriched in polar residues. Residues 1635–1654 (SDKERAEADRQRLEQEKQKQ) show a composition bias toward basic and acidic residues. Residues 1660 to 1679 (GSQSQLESTDQQALENNGQA) are compositionally biased toward polar residues. The span at 1791-1815 (DAEKRKADALAKGKDAQQAESDAHH) shows a compositional bias: basic and acidic residues. The segment covering 1879-1888 (HVNTDSQTNA) has biased composition (polar residues). In terms of domain architecture, ACD spans 1988–2422 (VPGFKSHFAS…HAEQWAKITA (435 aa)). Residue 1999–2003 (SIGIE) participates in ATP binding. 3 residues coordinate Mg(2+): Glu-2003, Glu-2065, and Gln-2149. An ATP-binding site is contributed by Arg-2255. A Mg(2+)-binding site is contributed by Glu-2326. The interval 2574–2658 (ELMSVTELLD…SLLNQVNTRL (85 aa)) is membrane localization region (MLD). Positions 2734-3098 (EYGQTVADTI…HQVTDVLDAL (365 aa)) are rho inactivation domain (RID). The interval 3195 to 3310 (VVLFLHGSGS…MPSMTKAITA (116 aa)) is ABH effector region. The interval 3404 to 3426 (ASVDEDLDQQGLDTTSTKDQGIS) is disordered. A compositionally biased stretch (polar residues) spans 3414–3426 (GLDTTSTKDQGIS). A Peptidase C80 domain is found at 3462–3646 (PTTDGGETRF…AENNKVSLSW (185 aa)). 1D-myo-inositol hexakisphosphate is bound by residues 3468-3470 (ETR), 3495-3496 (KH), and Arg-3526. His-3532 acts as the For cysteine protease activity in catalysis. Ser-3577 is a 1D-myo-inositol hexakisphosphate binding site. The Nucleophile; for cysteine protease activity role is filled by Cys-3581. Residues 3610 to 3612 (SVR), 3623 to 3624 (RK), Lys-3636, and Lys-3641 contribute to the 1D-myo-inositol hexakisphosphate site.

The cofactor is Mg(2+).

The protein localises to the secreted. It localises to the host cytoplasm. Its subcellular location is the host cytosol. The protein resides in the host cell membrane. The enzyme catalyses L-lysyl-/S-(2E,6E,10E)-geranylgeranyl-L-cysteinyl-[protein] + hexadecanoyl-CoA = N(6)-hexadecanoyl-L-lysyl-/S-(2E,6E,10E)-geranylgeranyl-L-cysteinyl-[protein] + CoA + H(+). The catalysed reaction is L-lysyl-/S-(2E,6E,10E)-geranylgeranyl-L-cysteinyl-[protein] + dodecanoyl-CoA = N(6)-dodecanoyl-L-lysyl-/S-(2E,6E,10E)-geranylgeranyl-L-cysteinyl-[protein] + CoA + H(+). It catalyses the reaction L-lysyl-/S-(2E,6E,10E)-geranylgeranyl-L-cysteinyl-[protein] + decanoyl-CoA = N(6)-decanoyl-L-lysyl-/S-(2E,6E,10E)-geranylgeranyl-L-cysteinyl-[protein] + CoA + H(+). Protease activity is inhibited by N-ethylmaleimide but not other protease inhibitors. Protease activity is inhibited by aza-leucine epoxide. Protease activity is activated upon binding inositol hexakisphosphate (InsP6) via an allosteric mechanism: the active site is disordered or occluded in the absence of InsP6, protecting the protease active-site sulfhydryl until the toxin enters a eukaryotic cell. Upon processing at the Leu-3441-Ala-3442 site, the peptidase C80 domain is converted to a form with much reduced affinity for InsP6, but is reactivated for high affinity binding of InsP6 by cooperative binding of both a new substrate and InsP6. Reactivation allows cleavage at other sites, specifically at Leu residues between the effector domains. Precursor of a multifunctional toxin that causes destruction of the actin cytoskeleton by covalent cross-linking of actin and inactivation of Rho GTPases when translocated into the host cytoplasm. Upon translocation into the host cell, undergoes autoprocessing in cis mediated by the peptidase C80 domain (also named CPD domain): the protease activity is activated upon binding inositol hexakisphosphate (InsP6) present at the host cell membrane and delivers the Cysteine protease domain-containing toxin F3 chain to the host cytosol. The Cysteine protease domain-containing toxin F3 chain will then further cleave and release effector toxin chains that cause disassembly of the actin cytoskeleton and enhance V.cholerae colonization of the small intestine, possibly by facilitating evasion of phagocytic cells. Functionally, following autocatalytic cleavage in cis at the Leu-3441-Ala-3442 site, this chain mediates processing in trans to release other individual toxin chains to the host cytosol. Released effector toxin chains cause disassembly of the actin cytoskeleton and enhance V.cholerae colonization of the small intestine, possibly by facilitating evasion of phagocytic cells. In terms of biological role, actin-directed toxin that catalyzes the covalent cross-linking of host cytoplasmic monomeric actin. Mediates the cross-link between 'Lys-50' of one monomer and 'Glu-270' of another actin monomer, resulting in formation of highly toxic actin oligomers that cause cell rounding. The toxin can be highly efficient at very low concentrations by acting on formin homology family proteins: toxic actin oligomers bind with high affinity to formins and adversely affect both nucleation and elongation abilities of formins, causing their potent inhibition in both profilin-dependent and independent manners. Acts as an acid--amino-acid ligase that transfers the gamma-phosphoryl group of ATP to the 'Glu-270' actin residue, resulting in the formation of an activated acyl phosphate intermediate. This intermediate is further hydrolyzed and the energy of hydrolysis is utilized for the formation of the amide bond between actin subunits. Its function is as follows. N-epsilon-fatty acyltransferase that mediates lysine-palmitoylation of host Rho GTPase proteins, with a strong preference for host Rac1. After delivery to the host cytosol, localizes to the host cell membrane where it palmitoylates host Rho GTPase proteins, resulting in loss of all active GTP-bound Rho and subsequent actin depolymerization. Prenylation of host Rac1 at the C-terminus is required for lysine-palmitoylation. Indirectly activates the small GTPase CDC42. This Vibrio cholerae serotype O1 (strain ATCC 39315 / El Tor Inaba N16961) protein is Multifunctional-autoprocessing repeats-in-toxin.